We begin with the raw amino-acid sequence, 452 residues long: MAEAAAAGASGETMAALVAAEGSLGPAGWSAGRSFSNYRPFEPQTLGFSPSWRLTSFSGMKGUGCKVPQETLLKLLEGLTRPALQPPLTSGLVGGQEETVQEGGLSTRPGPGSAFPSLSIGMDSCVIPLRHGGLSLVQTTDFFYPLVEDPYMMGRIACANVLSDLYAMGITECDNMLMLLSVSQSMSEKEREKVTPLMIKGFRDAAEEGGTAVTGGQTVVNPWIIIGGVATVVCQQNEFIMPDSAVVGDVLVLTKPLGTQVAANAHQWLDNPEKWNKIKMVVSREEVELAYQEAMFNMATLNRTAAGLMHTFNAHAATDITGFGILGHSQNLAKQQKNEVSFVIHNLPIIAKMAAISKASGRFGLLQGTSAETSGGLLICLPREQAARFCSEIKSSKYGEGHQAWIVGIVEKGNRTARIIDKPRVIEVLPRGASAAAAAAPDNSNAASEPSS.

Residue alanine 2 is modified to N-acetylalanine. Serine 49 carries the post-translational modification Phosphoserine. Selenocysteine 63 is a catalytic residue. Selenocysteine 63 is a non-standard amino acid (selenocysteine). Lysine 66 is an ATP binding site. The interval 86 to 111 is disordered; sequence PPLTSGLVGGQEETVQEGGLSTRPGP. Residues 95 to 105 show a composition bias toward low complexity; sequence GQEETVQEGGL. Residues 121-123, aspartate 141, aspartate 164, and 215-218 each bind ATP; these read GMD and GGQT. Position 123 (aspartate 123) interacts with Mg(2+). Aspartate 164 is a Mg(2+) binding site. Position 319 (aspartate 319) interacts with Mg(2+).

It belongs to the selenophosphate synthase 1 family. Class I subfamily. Homodimer. It depends on Mg(2+) as a cofactor. Truncated SEPHS2 proteins produced by failed UGA/Sec decoding are ubiquitinated by the CRL2(KLHDC3) complex, which recognizes the glycine (Gly) at the C-terminus of truncated SEPHS2 proteins.

The catalysed reaction is hydrogenselenide + ATP + H2O = selenophosphate + AMP + phosphate + 2 H(+). Its function is as follows. Synthesizes selenophosphate from selenide and ATP. The sequence is that of Selenide, water dikinase 2 (Sephs2) from Mus musculus (Mouse).